Consider the following 352-residue polypeptide: Histidinol-phosphate aminotransferase (352 aa).

Residue Lys-221 is modified to N6-(pyridoxal phosphate)lysine.

The protein belongs to the class-II pyridoxal-phosphate-dependent aminotransferase family. Histidinol-phosphate aminotransferase subfamily. Homodimer. Requires pyridoxal 5'-phosphate as cofactor.

It carries out the reaction L-histidinol phosphate + 2-oxoglutarate = 3-(imidazol-4-yl)-2-oxopropyl phosphate + L-glutamate. It participates in amino-acid biosynthesis; L-histidine biosynthesis; L-histidine from 5-phospho-alpha-D-ribose 1-diphosphate: step 7/9. This chain is Histidinol-phosphate aminotransferase, found in Staphylococcus aureus (strain bovine RF122 / ET3-1).